The primary structure comprises 413 residues: Gamma-glutamyl phosphate reductase (413 aa).

Belongs to the gamma-glutamyl phosphate reductase family.

It localises to the cytoplasm. It catalyses the reaction L-glutamate 5-semialdehyde + phosphate + NADP(+) = L-glutamyl 5-phosphate + NADPH + H(+). It participates in amino-acid biosynthesis; L-proline biosynthesis; L-glutamate 5-semialdehyde from L-glutamate: step 2/2. In terms of biological role, catalyzes the NADPH-dependent reduction of L-glutamate 5-phosphate into L-glutamate 5-semialdehyde and phosphate. The product spontaneously undergoes cyclization to form 1-pyrroline-5-carboxylate. The chain is Gamma-glutamyl phosphate reductase from Thermus thermophilus (strain ATCC 27634 / DSM 579 / HB8).